We begin with the raw amino-acid sequence, 325 residues long: MHPKIFALLAKFPRVELIPWETPIQYLPNISREIGADVYIKRDDLTGLGIGGNKIRKLEYLLGDALSKGADVVITVGAVHSNHAFVTGLAAKKLGLDAILVLRGKEELKGNYLLDKIMGIETRVYDAKDSFELMKYAEEIAEELKREGRKPYVIPPGGASPIGTLGYVRAVGEIATQSEVKFDSIVVAAGSGGTLAGLSLGLSILNEDIRPVGIAVGRFGEVMTSKLDNLIKEAAELLGVKVEVRPELYDYSFGEYGKITGEVAQIIRKVGTREGIILDPVYTGKAFYGLVDLARKGELGEKILFIHTGGISGTFHYGDKLLSLL.

An N6-(pyridoxal phosphate)lysine modification is found at lysine 54.

It belongs to the ACC deaminase/D-cysteine desulfhydrase family. The cofactor is pyridoxal 5'-phosphate.

The catalysed reaction is 1-aminocyclopropane-1-carboxylate + H2O = 2-oxobutanoate + NH4(+). This chain is Putative 1-aminocyclopropane-1-carboxylate deaminase, found in Pyrococcus horikoshii (strain ATCC 700860 / DSM 12428 / JCM 9974 / NBRC 100139 / OT-3).